A 117-amino-acid polypeptide reads, in one-letter code: Serine rich endogenous peptide 5 (117 aa).

The first 31 residues, 1–31 (MATKTSNFVSLRVSLFILLLFISSQVAIADA), serve as a signal peptide directing secretion. The SCOOP motif motif lies at 41-55 (LQIVRRSRSQRGRQY). Positions 42-51 (QIVRRSRSQR) are enriched in basic residues. The interval 42–117 (QIVRRSRSQR…LPYASSPTST (76 aa)) is disordered. A SxS motif essential for MIK2 binding motif is present at residues 47-49 (SRS). A compositionally biased stretch (pro residues) spans 60–84 (LRVPPPPPPPLPQMPSAATPPPMPQ).

In terms of assembly, interacts with MIK2 (via extracellular leucine-rich repeat domain); this interaction triggers the formation of complex between MIK2 and the BAK1/SERK3 and SERK4 coreceptors, and subsequent BAK1 activation by phosphorylation.

The protein localises to the cell membrane. It is found in the secreted. It localises to the extracellular space. The protein resides in the apoplast. Its function is as follows. Brassicaceae-specific phytocytokine (plant endogenous peptide released into the apoplast) perceived by MIK2 in a BAK1/SERK3 and SERK4 coreceptors-dependent manner, that modulates various physiological and antimicrobial processes including growth prevention and reactive oxygen species (ROS) response regulation. The polypeptide is Serine rich endogenous peptide 5 (Arabidopsis thaliana (Mouse-ear cress)).